The sequence spans 474 residues: tRNA-2-methylthio-N(6)-dimethylallyladenosine synthase (474 aa).

The MTTase N-terminal domain maps to 3–120 (KKLLIKTWGC…LPEMIKQSQS (118 aa)). [4Fe-4S] cluster is bound by residues Cys12, Cys49, Cys83, Cys157, Cys161, and Cys164. The Radical SAM core domain maps to 143 to 375 (RAEGATAFVS…QQQINAQAMR (233 aa)). Residues 378-441 (RLMLGTEQRV…ANSLRGEIVR (64 aa)) enclose the TRAM domain.

This sequence belongs to the methylthiotransferase family. MiaB subfamily. As to quaternary structure, monomer. It depends on [4Fe-4S] cluster as a cofactor.

The protein localises to the cytoplasm. The enzyme catalyses N(6)-dimethylallyladenosine(37) in tRNA + (sulfur carrier)-SH + AH2 + 2 S-adenosyl-L-methionine = 2-methylsulfanyl-N(6)-dimethylallyladenosine(37) in tRNA + (sulfur carrier)-H + 5'-deoxyadenosine + L-methionine + A + S-adenosyl-L-homocysteine + 2 H(+). Functionally, catalyzes the methylthiolation of N6-(dimethylallyl)adenosine (i(6)A), leading to the formation of 2-methylthio-N6-(dimethylallyl)adenosine (ms(2)i(6)A) at position 37 in tRNAs that read codons beginning with uridine. The polypeptide is tRNA-2-methylthio-N(6)-dimethylallyladenosine synthase (Vibrio vulnificus (strain YJ016)).